Reading from the N-terminus, the 294-residue chain is Protease HtpX (294 aa).

2 helical membrane-spanning segments follow: residues 4–24 (ILLF…ILFI) and 33–53 (FGLI…SLLL). Position 139 (H139) interacts with Zn(2+). E140 is a catalytic residue. H143 is a binding site for Zn(2+). A run of 2 helical transmembrane segments spans residues 147-167 (GDMI…IFLS) and 197-217 (FFIS…ITFW). A Zn(2+)-binding site is contributed by E223.

It belongs to the peptidase M48B family. Requires Zn(2+) as cofactor.

The protein resides in the cell membrane. The sequence is that of Protease HtpX from Wigglesworthia glossinidia brevipalpis.